The chain runs to 96 residues: Small ribosomal subunit protein bS6 (96 aa).

It belongs to the bacterial ribosomal protein bS6 family.

Its function is as follows. Binds together with bS18 to 16S ribosomal RNA. The polypeptide is Small ribosomal subunit protein bS6 (Mycolicibacterium paratuberculosis (strain ATCC BAA-968 / K-10) (Mycobacterium paratuberculosis)).